Consider the following 112-residue polypeptide: Putative pterin-4-alpha-carbinolamine dehydratase (112 aa).

It belongs to the pterin-4-alpha-carbinolamine dehydratase family.

The catalysed reaction is (4aS,6R)-4a-hydroxy-L-erythro-5,6,7,8-tetrahydrobiopterin = (6R)-L-erythro-6,7-dihydrobiopterin + H2O. In Shewanella oneidensis (strain ATCC 700550 / JCM 31522 / CIP 106686 / LMG 19005 / NCIMB 14063 / MR-1), this protein is Putative pterin-4-alpha-carbinolamine dehydratase.